Reading from the N-terminus, the 968-residue chain is RNA polymerase-associated protein RapA (968 aa).

The Helicase ATP-binding domain maps to 164-334 (EVGQRHAPRV…FARLRLLDPN (171 aa)). 177–184 (DEVGLGKT) lines the ATP pocket. The DEAH box motif lies at 280 to 283 (DEAH). The Helicase C-terminal domain maps to 490 to 664 (RVEWLLNYLV…AAPTEQEGLD (175 aa)).

It belongs to the SNF2/RAD54 helicase family. RapA subfamily. In terms of assembly, interacts with the RNAP. Has a higher affinity for the core RNAP than for the holoenzyme. Its ATPase activity is stimulated by binding to RNAP.

In terms of biological role, transcription regulator that activates transcription by stimulating RNA polymerase (RNAP) recycling in case of stress conditions such as supercoiled DNA or high salt concentrations. Probably acts by releasing the RNAP, when it is trapped or immobilized on tightly supercoiled DNA. Does not activate transcription on linear DNA. Probably not involved in DNA repair. In Serratia proteamaculans (strain 568), this protein is RNA polymerase-associated protein RapA.